Here is a 136-residue protein sequence, read N- to C-terminus: Alpha-2-purothionin (136 aa).

The first 27 residues, 1 to 27 (MGSKGLKGVMVCLLILGLVLEQVQVEG), serve as a signal peptide directing secretion. 4 disulfides stabilise this stretch: C30-C66, C31-C58, C39-C56, and C43-C52. A propeptide spans 73–136 (LALESNSDEP…GDAGLTSLDA (64 aa)) (acidic domain).

This sequence belongs to the plant thionin (TC 1.C.44) family. 4 C-C subfamily.

The protein resides in the secreted. Its function is as follows. Thionins are small plant proteins which are toxic to animal cells. They seem to exert their toxic effect at the level of the cell membrane. Their precise function is not known. In Triticum aestivum (Wheat), this protein is Alpha-2-purothionin (THI1.2).